The sequence spans 837 residues: Anaphase-promoting complex subunit 4 (837 aa).

2 stretches are compositionally biased toward low complexity: residues Asn-59–Asn-81 and Ser-547–Asn-581. Disordered regions lie at residues Asn-59–Lys-89 and Ser-547–Asn-588.

It belongs to the APC4 family. In terms of assembly, the APC/C is composed of at least 13 subunits that stay tightly associated throughout the cell cycle: anapc1, anapc2, anapc3, anapc4, anapc5, anapc6, anapc7, anapc8, anapc10, anapc11, cdc20, cdc26 and cdh1.

Its subcellular location is the nucleus. It functions in the pathway protein modification; protein ubiquitination. Functionally, component of the anaphase promoting complex/cyclosome (APC/C), a cell cycle-regulated E3 ubiquitin-protein ligase complex that controls progression through mitosis and the G1 phase of the cell cycle. This chain is Anaphase-promoting complex subunit 4 (anapc4), found in Dictyostelium discoideum (Social amoeba).